Here is an 88-residue protein sequence, read N- to C-terminus: Small ribosomal subunit protein bS20 (88 aa).

Belongs to the bacterial ribosomal protein bS20 family.

Binds directly to 16S ribosomal RNA. This chain is Small ribosomal subunit protein bS20, found in Heliobacterium modesticaldum (strain ATCC 51547 / Ice1).